The primary structure comprises 692 residues: Elongation factor G 1 (692 aa).

The tr-type G domain occupies 8-283 (EKTRNIGIMA…SVVEYLPSPV (276 aa)). GTP-binding positions include 17–24 (AHIDAGKT), 81–85 (DTPGH), and 135–138 (NKMD).

It belongs to the TRAFAC class translation factor GTPase superfamily. Classic translation factor GTPase family. EF-G/EF-2 subfamily.

The protein resides in the cytoplasm. Its function is as follows. Catalyzes the GTP-dependent ribosomal translocation step during translation elongation. During this step, the ribosome changes from the pre-translocational (PRE) to the post-translocational (POST) state as the newly formed A-site-bound peptidyl-tRNA and P-site-bound deacylated tRNA move to the P and E sites, respectively. Catalyzes the coordinated movement of the two tRNA molecules, the mRNA and conformational changes in the ribosome. The sequence is that of Elongation factor G 1 from Geobacter metallireducens (strain ATCC 53774 / DSM 7210 / GS-15).